A 411-amino-acid chain; its full sequence is Translation initiation factor 2 subunit gamma (411 aa).

The region spanning 9–201 (QPSVNIGMVG…AIEKYIPSPK (193 aa)) is the tr-type G domain. The G1 stretch occupies residues 18–25 (GHVDHGKS). The Mg(2+) site is built by D21, S25, G46, and S48. 21–26 (DHGKST) lines the GTP pocket. The interval 46-50 (GISIK) is G2. Residues 88–91 (DAPG) form a G3 region. GTP-binding positions include 144 to 147 (NKID) and 179 to 181 (SAY). Positions 144–147 (NKID) are G4. Residues 179 to 181 (SAY) are G5.

This sequence belongs to the TRAFAC class translation factor GTPase superfamily. Classic translation factor GTPase family. EIF2G subfamily. As to quaternary structure, heterotrimer composed of an alpha, a beta and a gamma chain. Mg(2+) is required as a cofactor.

It catalyses the reaction GTP + H2O = GDP + phosphate + H(+). In terms of biological role, eIF-2 functions in the early steps of protein synthesis by forming a ternary complex with GTP and initiator tRNA. The chain is Translation initiation factor 2 subunit gamma from Thermoplasma acidophilum (strain ATCC 25905 / DSM 1728 / JCM 9062 / NBRC 15155 / AMRC-C165).